An 88-amino-acid polypeptide reads, in one-letter code: MIASSIKAEVVKANARAANDTGSPEVQVALLTARINELTPHFKTHAKDHHGRRGLLRMVSRRRKLLDYLKAKDADRYTALIAKLGLRK.

This sequence belongs to the universal ribosomal protein uS15 family. As to quaternary structure, part of the 30S ribosomal subunit. Forms a bridge to the 50S subunit in the 70S ribosome, contacting the 23S rRNA.

Functionally, one of the primary rRNA binding proteins, it binds directly to 16S rRNA where it helps nucleate assembly of the platform of the 30S subunit by binding and bridging several RNA helices of the 16S rRNA. Forms an intersubunit bridge (bridge B4) with the 23S rRNA of the 50S subunit in the ribosome. The chain is Small ribosomal subunit protein uS15 from Verminephrobacter eiseniae (strain EF01-2).